Consider the following 471-residue polypeptide: Putative multidrug resistance protein MdtD (471 aa).

Residues 1 to 11 (MTDLPDSTRWQ) are Periplasmic-facing. Residues 12–32 (LWIVAFGFFMQSLDTTIVNTA) form a helical membrane-spanning segment. Residues 33 to 48 (LPSMAQSLGESPLHMH) lie on the Cytoplasmic side of the membrane. A helical membrane pass occupies residues 49 to 69 (MVIVSYVLTVAVMLPASGWLA). At 70–76 (DKVGVRN) the chain is on the periplasmic side. The helical transmembrane segment at 77 to 97 (IFFTAIVLFTLGSLFCALSGT) threads the bilayer. Residues 98-101 (LNEL) are Cytoplasmic-facing. A helical membrane pass occupies residues 102–124 (LLARALQGVGGAMMVPVGRLTVM). Residues 125 to 137 (KIVPREQYMAAMT) lie on the Periplasmic side of the membrane. Residues 138–158 (FVTLPGQVGPLLGPALGGLLV) form a helical membrane-spanning segment. The Cytoplasmic segment spans residues 159 to 164 (EYASWH). A helical transmembrane segment spans residues 165-185 (WIFLINIPVGIIGAIATLMLM). Topologically, residues 186 to 196 (PNYTMQTRRFD) are periplasmic. Residues 197-217 (LSGFLLLAVGMAVLTLALDGS) form a helical membrane-spanning segment. At 218 to 224 (KGTGLSP) the chain is on the cytoplasmic side. Residues 225–245 (LAIAGLVAVGVVALVLYLLHA) form a helical membrane-spanning segment. Residues 246–262 (RNNNRALFSLKLFRTRT) are Periplasmic-facing. A helical transmembrane segment spans residues 263-283 (FSLGLAGSFAGRIGSGMLPFM). Topologically, residues 284-285 (TP) are cytoplasmic. The helical transmembrane segment at 286 to 306 (VFLQIGLGFSPFHAGLMMIPM) threads the bilayer. The Periplasmic segment spans residues 307–341 (VLGSMGMKRIVVQVVNRFGYRRVLVATTLGLSLVT). Residues 342–362 (LLFMTTALLGWYYVLPFVLFL) traverse the membrane as a helical segment. The Cytoplasmic segment spans residues 363 to 395 (QGMVNSTRFSSMNTLTLKDLPDNLASSGNSLLS). A helical transmembrane segment spans residues 396-416 (MIMQLSMSIGVTIAGLLLGLF). Residues 417 to 430 (GSQHISVDSGTTQT) lie on the Periplasmic side of the membrane. Residues 431–451 (VFMYTWLSMAFIIALPAFIFA) traverse the membrane as a helical segment. The Cytoplasmic portion of the chain corresponds to 452-471 (RVPNDTHQNVAISRRKRSAQ).

It belongs to the major facilitator superfamily. TCR/Tet family.

It localises to the cell inner membrane. The protein is Putative multidrug resistance protein MdtD of Shigella flexneri.